The primary structure comprises 267 residues: DNA repair protein RecO (267 aa).

This sequence belongs to the RecO family.

Its function is as follows. Involved in DNA repair and RecF pathway recombination. This Prochlorococcus marinus (strain MIT 9313) protein is DNA repair protein RecO.